We begin with the raw amino-acid sequence, 147 residues long: Antiholin-like protein LrgA (147 aa).

The next 4 membrane-spanning stretches (helical) occupy residues 12-32 (PAHF…SKII), 35-55 (FMPI…VLLC), 74-94 (NIGL…GVIS), and 98-118 (FLII…TGYV).

It belongs to the CidA/LrgA family. LrgA subfamily.

It is found in the cell membrane. In terms of biological role, inhibits the expression or activity of extracellular murein hydrolases by interacting, possibly with LrgB, with the holin-like proteins CidA and/or CidB. The LrgAB and CidAB proteins may affect the proton motive force of the membrane. May be involved in programmed cell death (PCD), possibly triggering PCD in response to antibiotics and environmental stresses. This is Antiholin-like protein LrgA from Staphylococcus aureus (strain MSSA476).